A 1032-amino-acid chain; its full sequence is uncharacterized protein (1032 aa).

The Cytoplasmic segment spans residues methionine 1 to proline 17. Residues valine 18–serine 36 traverse the membrane as a helical segment. Topologically, residues lysine 37 to glutamate 337 are periplasmic. A helical membrane pass occupies residues valine 338 to isoleucine 357. At glycine 358–isoleucine 363 the chain is on the cytoplasmic side. The chain crosses the membrane as a helical span at residues leucine 364 to serine 383. Topologically, residues phenylalanine 384–asparagine 389 are periplasmic. A helical transmembrane segment spans residues leucine 390–leucine 411. Residues glutamate 412–proline 438 lie on the Cytoplasmic side of the membrane. The helical transmembrane segment at valine 439–glycine 457 threads the bilayer. Over glycine 458–threonine 470 the chain is Periplasmic. A helical transmembrane segment spans residues leucine 471–leucine 493. Residues leucine 494–arginine 529 are Cytoplasmic-facing. A helical membrane pass occupies residues lysine 530–asparagine 548. The Periplasmic portion of the chain corresponds to serine 549–alanine 852. A helical transmembrane segment spans residues leucine 853–phenylalanine 872. Residues glutamate 873 to proline 878 are Cytoplasmic-facing. A helical transmembrane segment spans residues methionine 879–isoleucine 898. The Periplasmic segment spans residues leucine 899 to asparagine 910. The helical transmembrane segment at isoleucine 911–cysteine 932 threads the bilayer. The Cytoplasmic segment spans residues glutamate 933–proline 960. Residues isoleucine 961 to threonine 979 form a helical membrane-spanning segment. Over glycine 980–valine 992 the chain is Periplasmic. The helical transmembrane segment at isoleucine 993–valine 1015 threads the bilayer. At alanine 1016–histidine 1032 the chain is on the cytoplasmic side.

It belongs to the resistance-nodulation-cell division (RND) (TC 2.A.6) family.

The protein localises to the cell inner membrane. Could be a drug efflux pump. This is an uncharacterized protein from Haemophilus influenzae (strain ATCC 51907 / DSM 11121 / KW20 / Rd).